We begin with the raw amino-acid sequence, 437 residues long: Tol-Pal system protein TolB (437 aa).

A signal peptide spans 1–23; sequence MQKRHPIIYLLITLLIFVPVSYG.

It belongs to the TolB family. The Tol-Pal system is composed of five core proteins: the inner membrane proteins TolA, TolQ and TolR, the periplasmic protein TolB and the outer membrane protein Pal. They form a network linking the inner and outer membranes and the peptidoglycan layer.

It is found in the periplasm. Its function is as follows. Part of the Tol-Pal system, which plays a role in outer membrane invagination during cell division and is important for maintaining outer membrane integrity. In Coxiella burnetii (strain RSA 493 / Nine Mile phase I), this protein is Tol-Pal system protein TolB.